Consider the following 21-residue polypeptide: Alpha-aminoadipic semialdehyde dehydrogenase (21 aa).

Belongs to the aldehyde dehydrogenase family. As to quaternary structure, homotetramer.

It carries out the reaction (S)-2-amino-6-oxohexanoate + NADP(+) + H2O = L-2-aminoadipate + NADPH + 2 H(+). The enzyme catalyses (S)-2-amino-6-oxohexanoate + NAD(+) + H2O = L-2-aminoadipate + NADH + 2 H(+). This Ctenopharyngodon idella (Grass carp) protein is Alpha-aminoadipic semialdehyde dehydrogenase (aldh7a1).